Here is a 324-residue protein sequence, read N- to C-terminus: Ferrochelatase (324 aa).

Residues His-197 and Glu-278 each coordinate Fe cation.

Belongs to the ferrochelatase family.

It localises to the cytoplasm. The enzyme catalyses heme b + 2 H(+) = protoporphyrin IX + Fe(2+). Its pathway is porphyrin-containing compound metabolism; protoheme biosynthesis; protoheme from protoporphyrin-IX: step 1/1. Functionally, catalyzes the ferrous insertion into protoporphyrin IX. The sequence is that of Ferrochelatase from Aeromonas hydrophila subsp. hydrophila (strain ATCC 7966 / DSM 30187 / BCRC 13018 / CCUG 14551 / JCM 1027 / KCTC 2358 / NCIMB 9240 / NCTC 8049).